The chain runs to 185 residues: Ribosome maturation factor RimP (185 aa).

The interval valine 162–arginine 185 is disordered.

The protein belongs to the RimP family.

The protein localises to the cytoplasm. Functionally, required for maturation of 30S ribosomal subunits. The sequence is that of Ribosome maturation factor RimP from Saccharopolyspora erythraea (strain ATCC 11635 / DSM 40517 / JCM 4748 / NBRC 13426 / NCIMB 8594 / NRRL 2338).